The primary structure comprises 406 residues: MSLIRVNGEAFNLSLESLKEDPFETKKTLETLIKQTSVILLAAGESRRFSQTIKKQWLRSNHTPLWLSVYESFTEALDFKEVILVVSELDYTYIKRHYPKIKLVRGGISRQESVCNALKVISGAYTLTSDVARGLANIEMLNDLFLTLQNTNHYCIAPYLPCYDTAIYYNEALDREAIKLIQTPQLSHTKTLQLALNQGDFKDESSAILQAFPDLVSYIEGSKDLHKLTTSDDLKIFTPFFNPAKDTFIGMGFDTHAFIKDKPMVLGGVVLDCEFGLKAHSDGDALLHAMIDAILGAIKGGDIGEWFPDNDPKYKNASSKELLKIVLDFSQSIGFELFEMGATIFSEIPKITPYKPAILENLSQLLGLEKSQISLKATTMEKMGFIGQQEGLLVQAHASMRYKQKL.

A 2-C-methyl-D-erythritol 4-phosphate cytidylyltransferase region spans residues 1–247 (MSLIRVNGEA…TPFFNPAKDT (247 aa)). The tract at residues 248–406 (FIGMGFDTHA…HASMRYKQKL (159 aa)) is 2-C-methyl-D-erythritol 2,4-cyclodiphosphate synthase. Asp-254 and His-256 together coordinate a divalent metal cation. 4-CDP-2-C-methyl-D-erythritol 2-phosphate contacts are provided by residues 254-256 (DTH) and 280-281 (HS). A divalent metal cation is bound at residue His-288. Residues 302 to 304 (DIG), 307 to 311 (FPDND), 378 to 381 (TTME), and Phe-385 contribute to the 4-CDP-2-C-methyl-D-erythritol 2-phosphate site.

It in the N-terminal section; belongs to the IspD/TarI cytidylyltransferase family. IspD subfamily. In the C-terminal section; belongs to the IspF family. A divalent metal cation is required as a cofactor.

It catalyses the reaction 2-C-methyl-D-erythritol 4-phosphate + CTP + H(+) = 4-CDP-2-C-methyl-D-erythritol + diphosphate. The catalysed reaction is 4-CDP-2-C-methyl-D-erythritol 2-phosphate = 2-C-methyl-D-erythritol 2,4-cyclic diphosphate + CMP. The protein operates within isoprenoid biosynthesis; isopentenyl diphosphate biosynthesis via DXP pathway; isopentenyl diphosphate from 1-deoxy-D-xylulose 5-phosphate: step 2/6. It participates in isoprenoid biosynthesis; isopentenyl diphosphate biosynthesis via DXP pathway; isopentenyl diphosphate from 1-deoxy-D-xylulose 5-phosphate: step 4/6. Functionally, bifunctional enzyme that catalyzes the formation of 4-diphosphocytidyl-2-C-methyl-D-erythritol from CTP and 2-C-methyl-D-erythritol 4-phosphate (MEP) (IspD), and catalyzes the conversion of 4-diphosphocytidyl-2-C-methyl-D-erythritol 2-phosphate (CDP-ME2P) to 2-C-methyl-D-erythritol 2,4-cyclodiphosphate (ME-CPP) with a corresponding release of cytidine 5-monophosphate (CMP) (IspF). The chain is Bifunctional enzyme IspD/IspF from Helicobacter acinonychis (strain Sheeba).